The chain runs to 91 residues: DNA/RNA-binding protein Alba (91 aa).

The protein belongs to the histone-like Alba family.

It localises to the cytoplasm. The protein localises to the chromosome. Binds double-stranded DNA tightly but without sequence specificity. Involved in DNA compaction. The chain is DNA/RNA-binding protein Alba from Methanoculleus marisnigri (strain ATCC 35101 / DSM 1498 / JR1).